The sequence spans 619 residues: Chaperone protein HscA homolog (619 aa).

The protein belongs to the heat shock protein 70 family.

In terms of biological role, chaperone involved in the maturation of iron-sulfur cluster-containing proteins. Has a low intrinsic ATPase activity which is markedly stimulated by HscB. The polypeptide is Chaperone protein HscA homolog (Chromobacterium violaceum (strain ATCC 12472 / DSM 30191 / JCM 1249 / CCUG 213 / NBRC 12614 / NCIMB 9131 / NCTC 9757 / MK)).